Here is a 241-residue protein sequence, read N- to C-terminus: 15,16-dihydrobiliverdin:ferredoxin oxidoreductase (241 aa).

A disordered region spans residues 16–35 (RGGQPAAVPEGLEHCHSSKS).

Belongs to the HY2 family.

It carries out the reaction 15,16-dihydrobiliverdin + oxidized 2[4Fe-4S]-[ferredoxin] = biliverdin IXalpha + reduced 2[4Fe-4S]-[ferredoxin] + 2 H(+). Its function is as follows. Catalyzes the two-electron reduction of biliverdin IX-alpha at the C15 methine bridge. The chain is 15,16-dihydrobiliverdin:ferredoxin oxidoreductase from Synechococcus sp. (strain WH7803).